The following is a 98-amino-acid chain: NADH-ubiquinone oxidoreductase chain 4L (98 aa).

Transmembrane regions (helical) follow at residues 2-22 (MMAVLNISLAFIFSLLGTLMF), 26-46 (LMSTLLCLEGMMLTLFIITTI), and 59-79 (IPIVILVFAACEAAVGLALLV).

Belongs to the complex I subunit 4L family. As to quaternary structure, core subunit of respiratory chain NADH dehydrogenase (Complex I) which is composed of 45 different subunits.

It localises to the mitochondrion inner membrane. The catalysed reaction is a ubiquinone + NADH + 5 H(+)(in) = a ubiquinol + NAD(+) + 4 H(+)(out). Its function is as follows. Core subunit of the mitochondrial membrane respiratory chain NADH dehydrogenase (Complex I) which catalyzes electron transfer from NADH through the respiratory chain, using ubiquinone as an electron acceptor. Part of the enzyme membrane arm which is embedded in the lipid bilayer and involved in proton translocation. This chain is NADH-ubiquinone oxidoreductase chain 4L (MT-ND4L), found in Phodopus sungorus (Striped hairy-footed hamster).